A 510-amino-acid polypeptide reads, in one-letter code: Beta-galactosidase (510 aa).

The active-site Proton donor is E210. E414 acts as the Nucleophile in catalysis.

This sequence belongs to the glycosyl hydrolase 1 family.

The catalysed reaction is Hydrolysis of terminal non-reducing beta-D-galactose residues in beta-D-galactosides.. The sequence is that of Beta-galactosidase from Pyrococcus woesei.